Consider the following 302-residue polypeptide: Acetylesterase (302 aa).

The first 21 residues, 1–21 (MGRFLTTTALALLATGGAATA), serve as a signal peptide directing secretion. Asn-84 and Asn-101 each carry an N-linked (GlcNAc...) asparagine glycan.

It belongs to the carbohydrate esterase CE16 family.

The protein localises to the secreted. It catalyses the reaction an acetyl ester + H2O = an aliphatic alcohol + acetate + H(+). In terms of biological role, acetyl esterase that acts as an exo-deacetylase. Liberates acetic acid from xylo-oligomers. The protein is Acetylesterase of Thermothelomyces thermophilus (Myceliophthora thermophila).